Consider the following 368-residue polypeptide: Glutamate 5-kinase (368 aa).

Residue K15 coordinates ATP. 3 residues coordinate substrate: S55, D143, and N155. ATP is bound by residues 175–176 (SD) and 217–223 (SGGMVSK). Residues 277 to 354 (EGRLTIDAGA…DAQEAALGYA (78 aa)) enclose the PUA domain.

This sequence belongs to the glutamate 5-kinase family.

It is found in the cytoplasm. It carries out the reaction L-glutamate + ATP = L-glutamyl 5-phosphate + ADP. The protein operates within amino-acid biosynthesis; L-proline biosynthesis; L-glutamate 5-semialdehyde from L-glutamate: step 1/2. Functionally, catalyzes the transfer of a phosphate group to glutamate to form L-glutamate 5-phosphate. The chain is Glutamate 5-kinase from Sphingopyxis alaskensis (strain DSM 13593 / LMG 18877 / RB2256) (Sphingomonas alaskensis).